The primary structure comprises 178 residues: ATP-dependent protease subunit HslV (178 aa).

The active site involves T7. Na(+)-binding residues include G162, C165, and T168.

The protein belongs to the peptidase T1B family. HslV subfamily. In terms of assembly, a double ring-shaped homohexamer of HslV is capped on each side by a ring-shaped HslU homohexamer. The assembly of the HslU/HslV complex is dependent on binding of ATP.

Its subcellular location is the cytoplasm. The catalysed reaction is ATP-dependent cleavage of peptide bonds with broad specificity.. With respect to regulation, allosterically activated by HslU binding. Its function is as follows. Protease subunit of a proteasome-like degradation complex believed to be a general protein degrading machinery. The chain is ATP-dependent protease subunit HslV from Paraburkholderia phymatum (strain DSM 17167 / CIP 108236 / LMG 21445 / STM815) (Burkholderia phymatum).